We begin with the raw amino-acid sequence, 383 residues long: Meiotic recombination protein SPO11-2 (383 aa).

One can recognise a Topo IIA-type catalytic domain in the interval 24–167 (LLPHEARARI…LGIMASSRGL (144 aa)). Residue Tyr124 is the O-(5'-phospho-DNA)-tyrosine intermediate of the active site. Positions 217 and 270 each coordinate Mg(2+).

Belongs to the TOP6A family. As to quaternary structure, heterotetramer of 2 SPO11 (SPO11-1 and/or SPO11-2) and 2 MTOPVIB chains. Interacts with MTOPVIB. May form a heterodimer with SPO11-1. Interacts with PRD1. Does not interact with TOP6B. The cofactor is Mg(2+). In terms of tissue distribution, very low expression in flowers and shoots.

The protein resides in the nucleus. The enzyme catalyses ATP-dependent breakage, passage and rejoining of double-stranded DNA.. In terms of biological role, component of a topoisomerase 6 complex specifically required for meiotic recombination. Together with MTOPVIB, mediates DNA cleavage that forms the double-strand breaks (DSB) that initiate meiotic recombination. The complex promotes relaxation of negative and positive supercoiled DNA and DNA decatenation through cleavage and ligation cycles. The polypeptide is Meiotic recombination protein SPO11-2 (SPO11-2) (Arabidopsis thaliana (Mouse-ear cress)).